The chain runs to 141 residues: Ribonuclease P protein component (141 aa).

2 disordered regions span residues 37 to 56 (RTEE…VGFT) and 114 to 141 (RRIT…VNGK). Basic and acidic residues predominate over residues 114-124 (RRITAKGERRS).

It belongs to the RnpA family. Consists of a catalytic RNA component (M1 or rnpB) and a protein subunit.

The catalysed reaction is Endonucleolytic cleavage of RNA, removing 5'-extranucleotides from tRNA precursor.. In terms of biological role, RNaseP catalyzes the removal of the 5'-leader sequence from pre-tRNA to produce the mature 5'-terminus. It can also cleave other RNA substrates such as 4.5S RNA. The protein component plays an auxiliary but essential role in vivo by binding to the 5'-leader sequence and broadening the substrate specificity of the ribozyme. The chain is Ribonuclease P protein component from Brucella melitensis biotype 2 (strain ATCC 23457).